A 504-amino-acid chain; its full sequence is ATP synthase subunit alpha (504 aa).

Residue 169-176 (GDRQTGKT) participates in ATP binding.

This sequence belongs to the ATPase alpha/beta chains family. F-type ATPases have 2 components, CF(1) - the catalytic core - and CF(0) - the membrane proton channel. CF(1) has five subunits: alpha(3), beta(3), gamma(1), delta(1), epsilon(1). CF(0) has three main subunits: a(1), b(2) and c(9-12). The alpha and beta chains form an alternating ring which encloses part of the gamma chain. CF(1) is attached to CF(0) by a central stalk formed by the gamma and epsilon chains, while a peripheral stalk is formed by the delta and b chains.

It localises to the cell membrane. The catalysed reaction is ATP + H2O + 4 H(+)(in) = ADP + phosphate + 5 H(+)(out). In terms of biological role, produces ATP from ADP in the presence of a proton gradient across the membrane. The alpha chain is a regulatory subunit. The polypeptide is ATP synthase subunit alpha (Clostridium kluyveri (strain ATCC 8527 / DSM 555 / NBRC 12016 / NCIMB 10680 / K1)).